Here is a 397-residue protein sequence, read N- to C-terminus: CCA-adding enzyme (397 aa).

Residues Gly-26 and Arg-29 each coordinate ATP. The CTP site is built by Gly-26 and Arg-29. Mg(2+)-binding residues include Asp-39 and Asp-41. ATP-binding residues include Arg-110, Asp-153, Arg-156, Arg-159, and Arg-162. Arg-110, Asp-153, Arg-156, Arg-159, and Arg-162 together coordinate CTP.

The protein belongs to the tRNA nucleotidyltransferase/poly(A) polymerase family. Bacterial CCA-adding enzyme type 3 subfamily. As to quaternary structure, homodimer. The cofactor is Mg(2+).

The catalysed reaction is a tRNA precursor + 2 CTP + ATP = a tRNA with a 3' CCA end + 3 diphosphate. It carries out the reaction a tRNA with a 3' CCA end + 2 CTP + ATP = a tRNA with a 3' CCACCA end + 3 diphosphate. Functionally, catalyzes the addition and repair of the essential 3'-terminal CCA sequence in tRNAs without using a nucleic acid template. Adds these three nucleotides in the order of C, C, and A to the tRNA nucleotide-73, using CTP and ATP as substrates and producing inorganic pyrophosphate. tRNA 3'-terminal CCA addition is required both for tRNA processing and repair. Also involved in tRNA surveillance by mediating tandem CCA addition to generate a CCACCA at the 3' terminus of unstable tRNAs. While stable tRNAs receive only 3'-terminal CCA, unstable tRNAs are marked with CCACCA and rapidly degraded. This Bacillus mycoides (strain KBAB4) (Bacillus weihenstephanensis) protein is CCA-adding enzyme.